The primary structure comprises 96 residues: MIEIRETSSGVSFAVRLQPKAKKTAIIGELNGALKLGVTDPPIDGRANEALIRFVAGLLKVTRSSVTIAAGESSRNKVIRIEGVTAEQVRFRLKVW.

The protein belongs to the UPF0235 family.

This is UPF0235 protein Acid345_4205 from Koribacter versatilis (strain Ellin345).